Here is a 277-residue protein sequence, read N- to C-terminus: NAD kinase (277 aa).

Asp55 functions as the Proton acceptor in the catalytic mechanism. NAD(+)-binding positions include 55–56, 131–132, Arg157, Asp159, and 170–175; these read DG, NE, and TAYNKS.

It belongs to the NAD kinase family. A divalent metal cation is required as a cofactor.

It localises to the cytoplasm. It catalyses the reaction NAD(+) + ATP = ADP + NADP(+) + H(+). Its function is as follows. Involved in the regulation of the intracellular balance of NAD and NADP, and is a key enzyme in the biosynthesis of NADP. Catalyzes specifically the phosphorylation on 2'-hydroxyl of the adenosine moiety of NAD to yield NADP. This is NAD kinase from Streptococcus mutans serotype c (strain ATCC 700610 / UA159).